The following is an 851-amino-acid chain: M-phase phosphoprotein 8 (851 aa).

Positions 21 to 54 are disordered; that stretch reads NIGRSPEVEGGGAAGEEKDAATKGTVAVGDSEED. A phosphoserine mark is found at Ser-51, Ser-85, and Ser-136. Residues 59–118 form the Chromo domain; the sequence is FEVERILDMKCEGGKNLYKVRWKGYTSDDDTWEPEVHLEDCKEVLLEFRKKVAENKAKAV. The interval 80 to 87 is histone H3K9me3 binding; that stretch reads WKGYTSDD. A disordered region spans residues 133-174; that stretch reads EADSDIDQQGDTKEDTSPRKKKKKIKYKEDKSPDDLRKKRAK. A Phosphothreonine modification is found at Thr-144. Phosphoserine; by CDK1 occurs at positions 149 and 164. The span at 159–169 shows a compositional bias: basic and acidic residues; sequence YKEDKSPDDLR. Phosphoserine is present on residues Ser-188, Ser-263, Ser-267, and Ser-274. The tract at residues 240-302 is disordered; that stretch reads REDVKDNRKT…KTGQDTVQES (63 aa). Over residues 269 to 278 the composition is skewed to acidic residues; it reads TLEDESEDFL. Positions 279-295 are enriched in basic and acidic residues; that stretch reads SDNKEKQNVRTAKDKTG. The residue at position 313 (Ser-313) is a Phosphoserine. The disordered stretch occupies residues 315–428; it reads EEAGTRVRRK…DKEEKARKEP (114 aa). Over residues 329–364 the composition is skewed to basic and acidic residues; it reads RKFEEPKEIKKLENTNNFLERKMIPKKQRNQDKGRS. Residue Thr-379 is modified to Phosphothreonine; by CDK1. Ser-386 and Ser-394 each carry phosphoserine. Basic and acidic residues predominate over residues 401–428; that stretch reads EKERKNEPKEKYQKRYDFDKEEKARKEP. Position 447 is a phosphothreonine (Thr-447). 4 ANK repeats span residues 591 to 620, 624 to 653, 657 to 686, and 690 to 719; these read TGMT…KVNG, NGTT…FVNV, NGET…DCNI, and HQNS…TLSR.

In terms of assembly, homodimer. Interacts (via chromo domain) with histone H3K9me3. Has the highest affinity for H3K9me3, and lesser affinity for H3K9me2 and H3K9me1. Component of the HUSH complex; at least composed of TASOR, PPHLN1 and MPHOSPH8. Interacts with DNMT3, EHMT1 and SETDB1. Interacts with MORC2; the interaction associateS MORC2 with the HUSH complex which recruits MORC2 to heterochromatic loci. Interacts with ZNF638; leading to recruitment of the HUSH complex to unintegrated retroviral DNA. Interacts with TASOR. Post-translationally, phosphorylated in M (mitotic) phase. Phosphorylation by CDK1 promotes dissociation from chromatin.

The protein resides in the nucleus. It is found in the chromosome. In terms of biological role, heterochromatin component that specifically recognizes and binds methylated 'Lys-9' of histone H3 (H3K9me) and promotes recruitment of proteins that mediate epigenetic repression. Mediates recruitment of the HUSH complex to H3K9me3 sites: the HUSH complex is recruited to genomic loci rich in H3K9me3 and is required to maintain transcriptional silencing by promoting recruitment of SETDB1, a histone methyltransferase that mediates further deposition of H3K9me3, as well as MORC2. Binds H3K9me and promotes DNA methylation by recruiting DNMT3A to target CpG sites; these can be situated within the coding region of the gene. Mediates down-regulation of CDH1 expression. Also represses L1 retrotransposons in collaboration with MORC2 and, probably, SETDB1, the silencing is dependent of repressive epigenetic modifications, such as H3K9me3 mark. Silencing events often occur within introns of transcriptionally active genes, and lead to the down-regulation of host gene expression. The HUSH complex is also involved in the silencing of unintegrated retroviral DNA by being recruited by ZNF638: some part of the retroviral DNA formed immediately after infection remains unintegrated in the host genome and is transcriptionally repressed. In Rattus norvegicus (Rat), this protein is M-phase phosphoprotein 8.